We begin with the raw amino-acid sequence, 117 residues long: Appetite-regulating hormone (117 aa).

An N-terminal signal peptide occupies residues 1-23; sequence MPSLGTMCSLLLFSVLWVDLAMA. Ser-26 carries O-decanoyl serine; alternate lipidation. Ser-26 is lipidated: O-hexanoyl serine; alternate. Ser-26 carries O-octanoyl serine; alternate lipidation. A disordered region spans residues 30-68; sequence PEHQKLQQRKESKKPPAKLQPRALEGSLGPEDTSQVEEA. A compositionally biased stretch (basic and acidic residues) spans 31–43; that stretch reads EHQKLQQRKESKK. The propeptide at 52-75 is removed in mature form; the sequence is ALEGSLGPEDTSQVEEAEDELEIR. At Leu-98 the chain carries Leucine amide. A propeptide spans 99 to 117 (removed in mature form); sequence GKFLQEVLWEDTNEALADE.

The protein belongs to the motilin family. In terms of processing, O-octanoylated by GOAT/MBOAT4. O-octanoylation is essential for ghrelin activity. Amidation of Leu-98 is essential for obestatin activity.

The protein resides in the secreted. Ghrelin is the ligand for growth hormone secretagogue receptor type 1 (GHSR). Induces the release of growth hormone from the pituitary. Has an appetite-stimulating effect, induces adiposity and stimulates gastric acid secretion. Involved in growth regulation. Its function is as follows. Obestatin may be the ligand for GPR39. May have an appetite-reducing effect resulting in decreased food intake. May reduce gastric emptying activity and jejunal motility. The chain is Appetite-regulating hormone (GHRL) from Canis lupus familiaris (Dog).